The sequence spans 684 residues: Phenoloxidase 2 (684 aa).

Residues 1 to 50 constitute a propeptide that is removed on maturation; the sequence is MADKKNLLLLFDHPTEPVFMDKGKRVTVFDVPDSFLTDRYRPISNEVQSR. Positions 208, 212, and 238 each coordinate Cu cation. Glutamate 350 serves as the catalytic Proton acceptor. Residues histidine 365, histidine 369, and histidine 405 each contribute to the Cu cation site. 2 N-linked (GlcNAc...) asparagine glycosylation sites follow: asparagine 448 and asparagine 492. 2 cysteine pairs are disulfide-bonded: cysteine 581–cysteine 623 and cysteine 583–cysteine 630. N-linked (GlcNAc...) asparagine glycans are attached at residues asparagine 665 and asparagine 677.

Belongs to the tyrosinase family. Requires Cu(2+) as cofactor. Upon activation, a trypsin type protease cleaves prophenol oxidase to yield the active enzyme.

It is found in the secreted. It catalyses the reaction 2 L-dopa + O2 = 2 L-dopaquinone + 2 H2O. The enzyme catalyses L-tyrosine + O2 = L-dopaquinone + H2O. Its function is as follows. This is a copper-containing oxidase that functions in the formation of pigments such as melanins and other polyphenolic compounds. Catalyzes the rate-limiting conversions of tyrosine to DOPA, DOPA to DOPA-quinone and possibly 5,6 dihydroxyindole to indole-5'6 quinonee. This Drosophila melanogaster (Fruit fly) protein is Phenoloxidase 2 (PPO2).